The sequence spans 127 residues: Large ribosomal subunit protein bL20 (127 aa).

It belongs to the bacterial ribosomal protein bL20 family.

In terms of biological role, binds directly to 23S ribosomal RNA and is necessary for the in vitro assembly process of the 50S ribosomal subunit. It is not involved in the protein synthesizing functions of that subunit. The chain is Large ribosomal subunit protein bL20 from Streptomyces griseus subsp. griseus (strain JCM 4626 / CBS 651.72 / NBRC 13350 / KCC S-0626 / ISP 5235).